A 455-amino-acid chain; its full sequence is MSFIPHKPEQIEKMLGTIGASSIDQLFDEIPAHLRADTLKIKDGINEIQLANQMRKRANRNHHNTNFIGAGAYSHHIPAAIWDIVARGEFYTAYTPYQAEASQGGLQVIYEFQTMMAGLTGMDASNASMYDGATALAESVLMAIRSNKKAKSQKILIAEALHPTYLRVLETITKHQGIEFDIVNLDSKNGKTDITKLEDFANTDYAAVVIQSPNFLGQLADVDGITNWAHKHGALVIAVTNPMSLAILKSPAEWGENGADIVCGEGQPMGVPLASGGPYFGFMTCKMAHVRQMPGRIVGRTVDLDGNEGFCLTLQAREQHIRRAKATSNICTNQGLMVTAATIYMSLLGAKGLERVASISHENTTKLANELSKLDGVNARFNNVSFNEVVIDLPVNAEIFVTEMEKEGIDAGYFLGEYHSDLDNSIMVCATEIHTSEDIKEYIEATKKVLARIGG.

This sequence belongs to the GcvP family. N-terminal subunit subfamily. In terms of assembly, the glycine cleavage system is composed of four proteins: P, T, L and H. In this organism, the P 'protein' is a heterodimer of two subunits.

It carries out the reaction N(6)-[(R)-lipoyl]-L-lysyl-[glycine-cleavage complex H protein] + glycine + H(+) = N(6)-[(R)-S(8)-aminomethyldihydrolipoyl]-L-lysyl-[glycine-cleavage complex H protein] + CO2. The glycine cleavage system catalyzes the degradation of glycine. The P protein binds the alpha-amino group of glycine through its pyridoxal phosphate cofactor; CO(2) is released and the remaining methylamine moiety is then transferred to the lipoamide cofactor of the H protein. This chain is Probable glycine dehydrogenase (decarboxylating) subunit 1, found in Francisella philomiragia subsp. philomiragia (strain ATCC 25017 / CCUG 19701 / FSC 153 / O#319-036).